Consider the following 172-residue polypeptide: MSINFKDYVASVPDFPEAGVTFRDISPLMSDGEAYAAATDKIVEYAKNKGVEMIVGPEARGFIVGCPVAYKLGVGFAPARKKGKLPRETVSASYGLEYGKSTLYMHKDAVKPGQKVLVTDDLLATGGTIAATIKMVEELGGIVVGTAFFIELKDLNGREKIKDYDIFKLMEY.

The protein belongs to the purine/pyrimidine phosphoribosyltransferase family. In terms of assembly, homodimer.

The protein localises to the cytoplasm. The catalysed reaction is AMP + diphosphate = 5-phospho-alpha-D-ribose 1-diphosphate + adenine. It participates in purine metabolism; AMP biosynthesis via salvage pathway; AMP from adenine: step 1/1. Catalyzes a salvage reaction resulting in the formation of AMP, that is energically less costly than de novo synthesis. The chain is Adenine phosphoribosyltransferase from Latilactobacillus sakei subsp. sakei (strain 23K) (Lactobacillus sakei subsp. sakei).